The following is a 188-amino-acid chain: Large ribosomal subunit protein eL18 (188 aa).

A disordered region spans residues 147-188; that stretch reads EAEKHFGPAPGVPHSHTKPYVRSKGRKFERARGRRASRAYKN. Composition is skewed to basic residues over residues 161–171 and 178–188; these read SHTKPYVRSKG and RGRRASRAYKN.

The protein belongs to the eukaryotic ribosomal protein eL18 family.

It localises to the cytoplasm. The polypeptide is Large ribosomal subunit protein eL18 (rpl-18) (Caenorhabditis elegans).